A 197-amino-acid polypeptide reads, in one-letter code: Recombination protein RecR (197 aa).

The segment at 55 to 70 (CVQCRDFTESEICTIC) adopts a C4-type zinc-finger fold. The 96-residue stretch at 78 to 173 (QQLCVVESPA…RPSRLAQGMP (96 aa)) folds into the Toprim domain.

Belongs to the RecR family.

May play a role in DNA repair. It seems to be involved in an RecBC-independent recombinational process of DNA repair. It may act with RecF and RecO. This Xanthomonas euvesicatoria pv. vesicatoria (strain 85-10) (Xanthomonas campestris pv. vesicatoria) protein is Recombination protein RecR.